A 596-amino-acid polypeptide reads, in one-letter code: Cysteine--tRNA ligase (596 aa).

A unknown region spans residues 1 to 199; it reads MKSKTFLEKN…SQRYFEELRK (199 aa). Cys-212 serves as a coordination point for Zn(2+). The 'HIGH' region motif lies at 214-224; it reads PTVYDEVHIGN. Zn(2+)-binding residues include Cys-377, His-403, and Glu-407. The 'KMSKS' region signature appears at 435–439; that stretch reads KMSKS. Position 438 (Lys-438) interacts with ATP.

The protein belongs to the class-I aminoacyl-tRNA synthetase family. Monomer. It depends on Zn(2+) as a cofactor.

The protein localises to the cytoplasm. The catalysed reaction is tRNA(Cys) + L-cysteine + ATP = L-cysteinyl-tRNA(Cys) + AMP + diphosphate. The chain is Cysteine--tRNA ligase (cysS) from Mycoplasmopsis pulmonis (strain UAB CTIP) (Mycoplasma pulmonis).